A 393-amino-acid polypeptide reads, in one-letter code: Outer membrane protein assembly factor BamB (393 aa).

Residues 1-19 (MQLRKTLLVGLVSVALLSG) form the signal peptide. Cys20 carries the N-palmitoyl cysteine lipid modification. Cys20 carries the S-diacylglycerol cysteine lipid modification.

The protein belongs to the BamB family. In terms of assembly, part of the Bam complex, which is composed of the outer membrane protein BamA, and four lipoproteins BamB, BamC, BamD and BamE.

It is found in the cell outer membrane. Part of the outer membrane protein assembly complex, which is involved in assembly and insertion of beta-barrel proteins into the outer membrane. The protein is Outer membrane protein assembly factor BamB of Yersinia pestis.